A 273-amino-acid polypeptide reads, in one-letter code: MERCVFYISDGTAITAEVLGHAVLSQFPINVTTFTLPFVENAARAQSVCKQINEIYQDTGVRPLVFYSIISLEVREIIQRSEGFCQDIVQALVAPLQGELGVPPQPVLNRTHGLTESNLDKYDARIAAIDYALAHDDGISLRNLDQAQVILLGVSRCGKTPTSLYLAMQFGIRAANYPFIADDMDNLQLPAALKPFQHKLFGLTINPERLAAIREERRENSRYASLRQCRMEVGEVEALFRKNQIRYLNSTNYSVEEISTKILDILGMSRRMF.

G153–T160 provides a ligand contact to ADP.

The protein belongs to the pyruvate, phosphate/water dikinase regulatory protein family. PSRP subfamily.

It carries out the reaction [pyruvate, water dikinase] + ADP = [pyruvate, water dikinase]-phosphate + AMP + H(+). It catalyses the reaction [pyruvate, water dikinase]-phosphate + phosphate + H(+) = [pyruvate, water dikinase] + diphosphate. Bifunctional serine/threonine kinase and phosphorylase involved in the regulation of the phosphoenolpyruvate synthase (PEPS) by catalyzing its phosphorylation/dephosphorylation. The chain is Putative phosphoenolpyruvate synthase regulatory protein from Yersinia pseudotuberculosis serotype I (strain IP32953).